A 103-amino-acid chain; its full sequence is NADH-quinone oxidoreductase subunit K 1 (103 aa).

The next 3 helical transmembrane spans lie at 6 to 26 (LGHF…GIFL), 32 to 52 (IIIL…LVAF), and 67 to 87 (LVLT…VVFF).

It belongs to the complex I subunit 4L family. In terms of assembly, NDH-1 is composed of 14 different subunits. Subunits NuoA, H, J, K, L, M, N constitute the membrane sector of the complex.

The protein resides in the cell inner membrane. The catalysed reaction is a quinone + NADH + 5 H(+)(in) = a quinol + NAD(+) + 4 H(+)(out). Functionally, NDH-1 shuttles electrons from NADH, via FMN and iron-sulfur (Fe-S) centers, to quinones in the respiratory chain. The immediate electron acceptor for the enzyme in this species is believed to be ubiquinone. Couples the redox reaction to proton translocation (for every two electrons transferred, four hydrogen ions are translocated across the cytoplasmic membrane), and thus conserves the redox energy in a proton gradient. The protein is NADH-quinone oxidoreductase subunit K 1 of Rhodopseudomonas palustris (strain ATCC BAA-98 / CGA009).